The chain runs to 86 residues: Beta-toxin CsEI (86 aa).

An N-terminal signal peptide occupies residues 1–19 (MNSLLMITACLVLIGTVWA). The region spanning 20–84 (KDGYLVEKTG…TWPLPNKTCG (65 aa)) is the LCN-type CS-alpha/beta domain. 4 disulfide bridges follow: cysteine 30/cysteine 83, cysteine 34/cysteine 59, cysteine 43/cysteine 64, and cysteine 47/cysteine 66. Cysteine 83 is subject to Cysteine amide.

This sequence belongs to the long (4 C-C) scorpion toxin superfamily. Sodium channel inhibitor family. Beta subfamily. As to expression, expressed by the venom gland.

It is found in the secreted. Functionally, beta toxins bind voltage-independently at site-4 of sodium channels (Nav) and shift the voltage of activation toward more negative potentials thereby affecting sodium channel activation and promoting spontaneous and repetitive firing. Affects channels from chicken and frog. In Centruroides sculpturatus (Arizona bark scorpion), this protein is Beta-toxin CsEI.